The chain runs to 86 residues: Small ribosomal subunit protein bS16c (86 aa).

This sequence belongs to the bacterial ribosomal protein bS16 family.

Its subcellular location is the plastid. It localises to the chloroplast. The chain is Small ribosomal subunit protein bS16c from Liriodendron tulipifera (Tuliptree).